The sequence spans 1162 residues: Isoleucine--tRNA ligase (1162 aa).

A 'HIGH' region motif is present at residues Pro-50 to His-60. The 'KMSKS' region signature appears at Lys-710 to Arg-714. Lys-713 lines the ATP pocket.

This sequence belongs to the class-I aminoacyl-tRNA synthetase family. IleS type 2 subfamily. In terms of assembly, monomer. Requires Zn(2+) as cofactor.

The protein localises to the cytoplasm. The enzyme catalyses tRNA(Ile) + L-isoleucine + ATP = L-isoleucyl-tRNA(Ile) + AMP + diphosphate. Its function is as follows. Catalyzes the attachment of isoleucine to tRNA(Ile). As IleRS can inadvertently accommodate and process structurally similar amino acids such as valine, to avoid such errors it has two additional distinct tRNA(Ile)-dependent editing activities. One activity is designated as 'pretransfer' editing and involves the hydrolysis of activated Val-AMP. The other activity is designated 'posttransfer' editing and involves deacylation of mischarged Val-tRNA(Ile). This Bacteroides thetaiotaomicron (strain ATCC 29148 / DSM 2079 / JCM 5827 / CCUG 10774 / NCTC 10582 / VPI-5482 / E50) protein is Isoleucine--tRNA ligase.